The sequence spans 466 residues: Phage-like element PBSX protein XkdK (466 aa).

It belongs to the myoviridae tail sheath protein family.

The polypeptide is Phage-like element PBSX protein XkdK (xkdK) (Bacillus subtilis (strain 168)).